The sequence spans 72 residues: Large ribosomal subunit protein uL29 (72 aa).

This sequence belongs to the universal ribosomal protein uL29 family.

The sequence is that of Large ribosomal subunit protein uL29 from Rhodopirellula baltica (strain DSM 10527 / NCIMB 13988 / SH1).